The primary structure comprises 182 residues: Trypsin inhibitor 2 (182 aa).

Pyrrolidone carboxylic acid is present on Gln1. 2 disulfide bridges follow: Cys40/Cys84 and Cys136/Cys147.

Belongs to the protease inhibitor I3 (leguminous Kunitz-type inhibitor) family.

The polypeptide is Trypsin inhibitor 2 (Psophocarpus tetragonolobus (Winged bean)).